Here is a 235-residue protein sequence, read N- to C-terminus: uncharacterized protein (235 aa).

Disordered stretches follow at residues 60–96 (SSNR…QKKT) and 192–235 (LNTS…YDSF). The span at 80–93 (SFQNMNSSMPSSTQ) shows a compositional bias: polar residues. The segment covering 197-214 (SEDDTESIVETDYSEEEK) has biased composition (acidic residues).

This sequence belongs to the asfivirus DP238L family.

This is an uncharacterized protein from Ornithodoros (relapsing fever ticks).